The sequence spans 345 residues: Holliday junction branch migration complex subunit RuvB (345 aa).

A large ATPase domain (RuvB-L) region spans residues 3–187; it reads LDILQNRNNL…FGFTARLDFY (185 aa). Residues L26, R27, G68, K71, T72, T73, 134–136, R177, Y187, and R224 each bind ATP; that span reads EDF. Position 72 (T72) interacts with Mg(2+). The interval 188–259 is small ATPAse domain (RuvB-S); sequence SPEELLQVLI…IALKAMDVYE (72 aa). The tract at residues 262–345 is head domain (RuvB-H); sequence SLGLDRLDRA…EDLSGFELYL (84 aa). DNA contacts are provided by R317 and R322.

It belongs to the RuvB family. Homohexamer. Forms an RuvA(8)-RuvB(12)-Holliday junction (HJ) complex. HJ DNA is sandwiched between 2 RuvA tetramers; dsDNA enters through RuvA and exits via RuvB. An RuvB hexamer assembles on each DNA strand where it exits the tetramer. Each RuvB hexamer is contacted by two RuvA subunits (via domain III) on 2 adjacent RuvB subunits; this complex drives branch migration. In the full resolvosome a probable DNA-RuvA(4)-RuvB(12)-RuvC(2) complex forms which resolves the HJ.

The protein resides in the cytoplasm. The enzyme catalyses ATP + H2O = ADP + phosphate + H(+). Functionally, the RuvA-RuvB-RuvC complex processes Holliday junction (HJ) DNA during genetic recombination and DNA repair, while the RuvA-RuvB complex plays an important role in the rescue of blocked DNA replication forks via replication fork reversal (RFR). RuvA specifically binds to HJ cruciform DNA, conferring on it an open structure. The RuvB hexamer acts as an ATP-dependent pump, pulling dsDNA into and through the RuvAB complex. RuvB forms 2 homohexamers on either side of HJ DNA bound by 1 or 2 RuvA tetramers; 4 subunits per hexamer contact DNA at a time. Coordinated motions by a converter formed by DNA-disengaged RuvB subunits stimulates ATP hydrolysis and nucleotide exchange. Immobilization of the converter enables RuvB to convert the ATP-contained energy into a lever motion, pulling 2 nucleotides of DNA out of the RuvA tetramer per ATP hydrolyzed, thus driving DNA branch migration. The RuvB motors rotate together with the DNA substrate, which together with the progressing nucleotide cycle form the mechanistic basis for DNA recombination by continuous HJ branch migration. Branch migration allows RuvC to scan DNA until it finds its consensus sequence, where it cleaves and resolves cruciform DNA. This is Holliday junction branch migration complex subunit RuvB from Tropheryma whipplei (strain TW08/27) (Whipple's bacillus).